A 571-amino-acid polypeptide reads, in one-letter code: Urease subunit alpha (571 aa).

Residues 132 to 571 enclose the Urease domain; the sequence is GAIDTHIHFI…LPMGQKYFLF (440 aa). Ni(2+) is bound by residues His137, His139, and Lys220. Lys220 is subject to N6-carboxylysine. His222 serves as a coordination point for substrate. The Ni(2+) site is built by His249 and His275. His323 functions as the Proton donor in the catalytic mechanism. Asp363 is a Ni(2+) binding site.

This sequence belongs to the metallo-dependent hydrolases superfamily. Urease alpha subunit family. Heterotrimer of UreA (gamma), UreB (beta) and UreC (alpha) subunits. Three heterotrimers associate to form the active enzyme. It depends on Ni cation as a cofactor. Carboxylation allows a single lysine to coordinate two nickel ions.

The protein localises to the cytoplasm. The catalysed reaction is urea + 2 H2O + H(+) = hydrogencarbonate + 2 NH4(+). Its pathway is nitrogen metabolism; urea degradation; CO(2) and NH(3) from urea (urease route): step 1/1. The sequence is that of Urease subunit alpha from Corynebacterium urealyticum (strain ATCC 43042 / DSM 7109).